A 263-amino-acid chain; its full sequence is Bidirectional sugar transporter SWEET3 (263 aa).

The Extracellular portion of the chain corresponds to M1–L7. A helical transmembrane segment spans residues S8 to F28. The MtN3/slv 1 domain maps to I9–K97. The Cytoplasmic segment spans residues S29 to C42. A helical transmembrane segment spans residues F43–V63. Residues S64 to P71 lie on the Extracellular side of the membrane. The helical transmembrane segment at L72–Y92 threads the bilayer. Over Y93 to G103 the chain is Cytoplasmic. Residues V104–F124 traverse the membrane as a helical segment. Residues D125–S132 lie on the Extracellular side of the membrane. Residues F133–M153 traverse the membrane as a helical segment. A MtN3/slv 2 domain is found at F133–K217. Residues K154–M165 lie on the Cytoplasmic side of the membrane. Residues P166–L186 form a helical membrane-spanning segment. At S187–L190 the chain is on the extracellular side. The chain crosses the membrane as a helical span at residues F191–F211. At K212 to I263 the chain is on the cytoplasmic side.

This sequence belongs to the SWEET sugar transporter family. In terms of assembly, forms heterooligomers with SWEET11, SWEET13 and SWEET17.

Its subcellular location is the cell membrane. In terms of biological role, mediates both low-affinity uptake and efflux of sugar across the plasma membrane. This is Bidirectional sugar transporter SWEET3 from Arabidopsis thaliana (Mouse-ear cress).